We begin with the raw amino-acid sequence, 494 residues long: Glutamyl-tRNA(Gln) amidotransferase subunit A (494 aa).

Residues K80 and S160 each act as charge relay system in the active site. The tract at residues 140–168 is disordered; sequence GNVISPWRRPGDTAPLAPGGSSGGSSSAV. The Acyl-ester intermediate role is filled by S184.

It belongs to the amidase family. GatA subfamily. As to quaternary structure, heterotrimer of A, B and C subunits.

The enzyme catalyses L-glutamyl-tRNA(Gln) + L-glutamine + ATP + H2O = L-glutaminyl-tRNA(Gln) + L-glutamate + ADP + phosphate + H(+). Allows the formation of correctly charged Gln-tRNA(Gln) through the transamidation of misacylated Glu-tRNA(Gln) in organisms which lack glutaminyl-tRNA synthetase. The reaction takes place in the presence of glutamine and ATP through an activated gamma-phospho-Glu-tRNA(Gln). The sequence is that of Glutamyl-tRNA(Gln) amidotransferase subunit A from Novosphingobium aromaticivorans (strain ATCC 700278 / DSM 12444 / CCUG 56034 / CIP 105152 / NBRC 16084 / F199).